The following is a 417-amino-acid chain: NADH-quinone oxidoreductase subunit D 1 (417 aa).

The protein belongs to the complex I 49 kDa subunit family. NDH-1 is composed of 14 different subunits. Subunits NuoB, C, D, E, F, and G constitute the peripheral sector of the complex.

The protein resides in the cell membrane. The catalysed reaction is a quinone + NADH + 5 H(+)(in) = a quinol + NAD(+) + 4 H(+)(out). In terms of biological role, NDH-1 shuttles electrons from NADH, via FMN and iron-sulfur (Fe-S) centers, to quinones in the respiratory chain. The immediate electron acceptor for the enzyme in this species is believed to be ubiquinone. Couples the redox reaction to proton translocation (for every two electrons transferred, four hydrogen ions are translocated across the cytoplasmic membrane), and thus conserves the redox energy in a proton gradient. In Roseiflexus castenholzii (strain DSM 13941 / HLO8), this protein is NADH-quinone oxidoreductase subunit D 1.